The sequence spans 148 residues: Deoxyuridine 5'-triphosphate nucleotidohydrolase (148 aa).

Residues S69, G82, D85, Y88, R137, F142, and G143 each coordinate dUMP.

This sequence belongs to the dUTPase family. In terms of assembly, homotrimer. The cofactor is Mg(2+).

The catalysed reaction is dUTP + H2O = dUMP + diphosphate + H(+). The protein operates within pyrimidine metabolism; dUMP biosynthesis; dUMP from dCTP (dUTP route): step 2/2. Involved in nucleotide metabolism via production of dUMP, the immediate precursor of thymidine nucleotides, and decreases the intracellular concentration of dUTP so that uracil cannot be incorporated into DNA. This Kluyveromyces lactis (strain ATCC 8585 / CBS 2359 / DSM 70799 / NBRC 1267 / NRRL Y-1140 / WM37) (Yeast) protein is Deoxyuridine 5'-triphosphate nucleotidohydrolase (DUT1).